A 141-amino-acid chain; its full sequence is 6,7-dimethyl-8-ribityllumazine synthase (141 aa).

Residues phenylalanine 13, 45–47 (SFE), and 69–71 (AII) each bind 5-amino-6-(D-ribitylamino)uracil. 74 to 75 (DT) contributes to the (2S)-2-hydroxy-3-oxobutyl phosphate binding site. The Proton donor role is filled by histidine 77. Leucine 102 provides a ligand contact to 5-amino-6-(D-ribitylamino)uracil. Arginine 117 is a (2S)-2-hydroxy-3-oxobutyl phosphate binding site.

It belongs to the DMRL synthase family.

The enzyme catalyses (2S)-2-hydroxy-3-oxobutyl phosphate + 5-amino-6-(D-ribitylamino)uracil = 6,7-dimethyl-8-(1-D-ribityl)lumazine + phosphate + 2 H2O + H(+). Its pathway is cofactor biosynthesis; riboflavin biosynthesis; riboflavin from 2-hydroxy-3-oxobutyl phosphate and 5-amino-6-(D-ribitylamino)uracil: step 1/2. Its function is as follows. Catalyzes the formation of 6,7-dimethyl-8-ribityllumazine by condensation of 5-amino-6-(D-ribitylamino)uracil with 3,4-dihydroxy-2-butanone 4-phosphate. This is the penultimate step in the biosynthesis of riboflavin. The sequence is that of 6,7-dimethyl-8-ribityllumazine synthase from Methanopyrus kandleri (strain AV19 / DSM 6324 / JCM 9639 / NBRC 100938).